Consider the following 259-residue polypeptide: Protein POLYCHOME (259 aa).

The tract at residues 236–259 (KMKSTPSAKRAEREKRVRTLMSMR) is disordered.

In terms of assembly, interacts with APC/C activators such as APC5, FZR2, FZR3, CDC20.1 and CDC20.5. As to expression, expressed mainly in actively dividing cells (e.g. central cylinder of the root tip, young leaves and vascular tissues).

The protein localises to the nucleus. Its function is as follows. Negative regulator of the anaphase-promoting complex/cyclosome (APC/C) ubiquitin ligase required for proper mitotic progression and cell fate determination; inhibits premature cell differentiation. Prevents DNA endoreplication by promoting the maintenance of the mitotic state by preferentially inhibiting APC/C(FZR) and triggering cyclins accumulation (e.g. CYCB1-1, CYCB1-2 and CYCA2-3) in a temporal manner. Required for megagametophyte and endosperm development. Counteracts the activity of CCS52A1 thus inhibiting the turnover of CYCA2-3. Confers immunity to bacterial pathogens (e.g. Pseudomonas syringae pv. tomato DC3000), which is associated with increased expression of disease resistance (R) genes. This is Protein POLYCHOME (PYM) from Arabidopsis thaliana (Mouse-ear cress).